The sequence spans 288 residues: Diaminopimelate epimerase (288 aa).

Residues N14 and N67 each coordinate substrate. C76 serves as the catalytic Proton donor. Substrate contacts are provided by residues 77 to 78 (GN), N166, N199, and 217 to 218 (ER). Residue C226 is the Proton acceptor of the active site. 227 to 228 (GT) serves as a coordination point for substrate.

Belongs to the diaminopimelate epimerase family. As to quaternary structure, homodimer.

The protein resides in the cytoplasm. The catalysed reaction is (2S,6S)-2,6-diaminopimelate = meso-2,6-diaminopimelate. Its pathway is amino-acid biosynthesis; L-lysine biosynthesis via DAP pathway; DL-2,6-diaminopimelate from LL-2,6-diaminopimelate: step 1/1. Functionally, catalyzes the stereoinversion of LL-2,6-diaminopimelate (L,L-DAP) to meso-diaminopimelate (meso-DAP), a precursor of L-lysine and an essential component of the bacterial peptidoglycan. The sequence is that of Diaminopimelate epimerase from Bacillus cereus (strain ATCC 10987 / NRS 248).